A 20-amino-acid polypeptide reads, in one-letter code: LKDGPCPSYMDTCCLSPDRR.

It belongs to the peptidase S1 family.

The protein localises to the secreted. Its function is as follows. Binds the A.niger cell wall component alpha-1,3-glucan, a fungal pathogen-associated molecular pattern (PAMP) that activates the host immune response. The sequence is that of Putative serine protease from Galleria mellonella (Greater wax moth).